A 367-amino-acid polypeptide reads, in one-letter code: Histidinol-phosphate aminotransferase (367 aa).

Lysine 226 is subject to N6-(pyridoxal phosphate)lysine.

It belongs to the class-II pyridoxal-phosphate-dependent aminotransferase family. Histidinol-phosphate aminotransferase subfamily. Homodimer. Requires pyridoxal 5'-phosphate as cofactor.

The enzyme catalyses L-histidinol phosphate + 2-oxoglutarate = 3-(imidazol-4-yl)-2-oxopropyl phosphate + L-glutamate. It participates in amino-acid biosynthesis; L-histidine biosynthesis; L-histidine from 5-phospho-alpha-D-ribose 1-diphosphate: step 7/9. This is Histidinol-phosphate aminotransferase from Wolinella succinogenes (strain ATCC 29543 / DSM 1740 / CCUG 13145 / JCM 31913 / LMG 7466 / NCTC 11488 / FDC 602W) (Vibrio succinogenes).